The chain runs to 130 residues: Large ribosomal subunit protein bL12 (130 aa).

The protein belongs to the bacterial ribosomal protein bL12 family. Homodimer. Part of the ribosomal stalk of the 50S ribosomal subunit. Forms a multimeric L10(L12)X complex, where L10 forms an elongated spine to which 2 to 4 L12 dimers bind in a sequential fashion. Binds GTP-bound translation factors.

Its function is as follows. Forms part of the ribosomal stalk which helps the ribosome interact with GTP-bound translation factors. Is thus essential for accurate translation. The protein is Large ribosomal subunit protein bL12 of Yersinia pestis bv. Antiqua (strain Angola).